Reading from the N-terminus, the 321-residue chain is Digestive cysteine proteinase 3 (321 aa).

A signal peptide spans 1–16; it reads MKVAALFLCGLALATA. A propeptide spans 17 to 106 (activation peptide); it reads SPSWDHFKTQ…AVFTAEAGPM (90 aa). Intrachain disulfides connect C127-C170, C161-C203, and C261-C310. C130 is an active-site residue. Residues H268 and N288 contribute to the active site.

It belongs to the peptidase C1 family.

Inhibited by E-64, antipain, leupeptin, heavy metal ions, iodoacetic acid, dithionitrobenzene, p-hydroxymercuri-benzoate; activated by mercaptoethanol and dithiothreitol. This Homarus americanus (American lobster) protein is Digestive cysteine proteinase 3 (LCP3).